Here is a 440-residue protein sequence, read N- to C-terminus: Chromosome partition protein MukF (440 aa).

Residues 208-236 (LSETSGTLRELQDTLEAAGDKLQANLLRI) are leucine-zipper.

It belongs to the MukF family. As to quaternary structure, interacts, and probably forms a ternary complex, with MukE and MukB via its C-terminal region. The complex formation is stimulated by calcium or magnesium. It is required for an interaction between MukE and MukB.

The protein resides in the cytoplasm. Its subcellular location is the nucleoid. Involved in chromosome condensation, segregation and cell cycle progression. May participate in facilitating chromosome segregation by condensation DNA from both sides of a centrally located replisome during cell division. Not required for mini-F plasmid partitioning. Probably acts via its interaction with MukB and MukE. Overexpression results in anucleate cells. It has a calcium binding activity. This chain is Chromosome partition protein MukF, found in Salmonella typhi.